Here is a 983-residue protein sequence, read N- to C-terminus: Receptor-like protein 19 (983 aa).

The signal sequence occupies residues 1 to 25 (MMKGYITLSFLIILIFNFLDEFAAS). Topologically, residues 26-937 (TRHLCDPDQS…EEDEEEVISW (912 aa)) are extracellular. Residues N66 and N102 are each glycosylated (N-linked (GlcNAc...) asparagine). LRR repeat units lie at residues 82–108 (FGDV…LFRL), 111–135 (LRFL…LETL), 136–159 (SNLT…IGNL), 161–183 (HLIF…LGYL), 184–207 (SHLT…IGNL), 209–231 (YLTT…LGSL), 232–255 (FHLT…LGNL), 256–281 (SHLT…NLSC), 283–302 (TSFI…SFGN), 303–327 (LNQL…LLNL), 328–351 (RKLS…MSSL), 353–375 (NLKL…LFNI), 376–399 (PSLK…NISS), 401–424 (SNLT…ISKL), 425–448 (VNLK…IFSH), 450–474 (KSIE…ILSS), 475–498 (FKLL…SLSN), 501–524 (LVLI…LRSQ), 525–548 (ELML…LWML), 550–571 (VLNY…TKLG), 578–602 (PPAM…ICEL), 603–628 (PYLS…NIQS), 629–652 (PYLQ…IFES), 654–674 (ISLD…LSHI), 675–700 (SSLG…SLQE), 702–720 (QVLV…KTQF), 721–744 (SKLR…FFVN), 793–817 (LKVF…IGLL), 818–840 (KELH…SMGN), 841–865 (LMAL…LGKL), and 867–890 (YLAY…QFQT). N137, N158, N171, N190, N195, and N206 each carry an N-linked (GlcNAc...) asparagine glycan. Residues N254 and N278 are each glycosylated (N-linked (GlcNAc...) asparagine). An N-linked (GlcNAc...) asparagine glycan is attached at N347. 3 N-linked (GlcNAc...) asparagine glycosylation sites follow: N389, N396, and N402. 4 N-linked (GlcNAc...) asparagine glycosylation sites follow: N456, N461, N492, and N498. N555, N558, N590, and N616 each carry an N-linked (GlcNAc...) asparagine glycan. N734 and N744 each carry an N-linked (GlcNAc...) asparagine glycan. Residue N824 is glycosylated (N-linked (GlcNAc...) asparagine). N872 carries an N-linked (GlcNAc...) asparagine glycan. A helical transmembrane segment spans residues 938 to 958 (IAAVIGFILGTALGLTFGCIL). Residues 959-983 (FSYKPDWFKNPFVRDKRRNIGTITH) lie on the Cytoplasmic side of the membrane.

This sequence belongs to the RLP family.

It is found in the cell membrane. The sequence is that of Receptor-like protein 19 from Arabidopsis thaliana (Mouse-ear cress).